A 230-amino-acid polypeptide reads, in one-letter code: Lipoprotein-releasing system ATP-binding protein LolD (230 aa).

Positions 6–230 constitute an ABC transporter domain; it reads LQVQAVSKSY…GYLQVPESAQ (225 aa). 42–49 contributes to the ATP binding site; the sequence is GTSGSGKS.

It belongs to the ABC transporter superfamily. Lipoprotein translocase (TC 3.A.1.125) family. The complex is composed of two ATP-binding proteins (LolD) and two transmembrane proteins (LolC and LolE).

The protein resides in the cell inner membrane. Its function is as follows. Part of the ABC transporter complex LolCDE involved in the translocation of mature outer membrane-directed lipoproteins, from the inner membrane to the periplasmic chaperone, LolA. Responsible for the formation of the LolA-lipoprotein complex in an ATP-dependent manner. This chain is Lipoprotein-releasing system ATP-binding protein LolD, found in Shewanella oneidensis (strain ATCC 700550 / JCM 31522 / CIP 106686 / LMG 19005 / NCIMB 14063 / MR-1).